The primary structure comprises 140 residues: Small ribosomal subunit protein bS6 (140 aa).

The segment at 96–140 (VTGQSEMLKAEENRSERRERRDRPEHEGADSADSDDSDNSDNADE) is disordered. Positions 103-124 (LKAEENRSERRERRDRPEHEGA) are enriched in basic and acidic residues. A compositionally biased stretch (acidic residues) spans 125–140 (DSADSDDSDNSDNADE).

This sequence belongs to the bacterial ribosomal protein bS6 family.

Binds together with bS18 to 16S ribosomal RNA. The polypeptide is Small ribosomal subunit protein bS6 (Pseudomonas fluorescens (strain SBW25)).